The following is an 809-amino-acid chain: WASP homolog-associated protein with actin, membranes and microtubules (809 aa).

Residues 1–260 are mediates association with membranes; that stretch reads MEDEQPDSLE…EVATLCKLDI (260 aa). The mediates interaction with microtubules stretch occupies residues 261–630; the sequence is LKSLDEDDLG…FVPVGDQTHS (370 aa). 3 coiled-coil regions span residues 271 to 298, 384 to 479, and 512 to 542; these read PRRV…IQDI, ELEI…CAKR, and SIQM…LQRL. Disordered regions lie at residues 506-528, 546-571, 586-612, and 627-707; these read YSRQ…QKKK, KDKR…PSDL, IHPS…CQNC, and QTHS…FSCP. The span at 515–528 shows a compositional bias: basic and acidic residues; sequence MKRDKIKEEEQKKK. Ser-606 carries the phosphoserine modification. Residues 631–809 form a mediates actin nucleation region; sequence KSSEELSLPP…DEQDPGQWDG (179 aa). The span at 638–659 shows a compositional bias: pro residues; sequence LPPPPPPPPPPPPPPPPPPPPL. A compositionally biased stretch (polar residues) spans 662–673; the sequence is LSSSSQAATHQN. WH2 domains lie at 709–727 and 739–756; these read SMDE…LRKV and INEH…LKKV. Positions 754 to 809 are disordered; the sequence is KKVHPDLGPNPSSKPTSNRRTSDLERSIKAALQRIKRVSADSEEDSDEQDPGQWDG. Positions 763-772 are enriched in polar residues; it reads NPSSKPTSNR. Positions 770–797 form a coiled coil; the sequence is SNRRTSDLERSIKAALQRIKRVSADSEE. The segment covering 794–803 has biased composition (acidic residues); that stretch reads DSEEDSDEQD. Residue Ser-795 is modified to Phosphoserine.

In terms of assembly, interacts with ACTR3; indicative for an association with the ARP2/3 complex. Associates with microtubules; in vitro binds to tubulin heterodimer in a 1:1 stoichiometry; decorates microtubules with a repeat of 80 A along protofilaments. Interacts with RHOD (in GTP-bound form). As to expression, expressed in brain, lung, heart, colon and kidney (at protein level).

The protein localises to the cytoplasm. It localises to the endoplasmic reticulum-Golgi intermediate compartment. It is found in the cytoplasmic vesicle membrane. Its subcellular location is the golgi apparatus. The protein resides in the cis-Golgi network. In terms of biological role, acts as a nucleation-promoting factor (NPF) that stimulates Arp2/3-mediated actin polymerization both at the Golgi apparatus and along tubular membranes. Its activity in membrane tubulation requires F-actin and interaction with microtubules. Proposed to use coordinated actin-nucleating and microtubule-binding activities of distinct WHAMM molecules to drive membrane tubule elongation; when MT-bound can recruit and remodel membrane vesicles but is prevented to activate the Arp2/3 complex. Involved as a regulator of Golgi positioning and morphology. Participates in vesicle transport between the reticulum endoplasmic and the Golgi complex. Required for RhoD-dependent actin reorganization such as in cell adhesion and cell migration. The sequence is that of WASP homolog-associated protein with actin, membranes and microtubules (WHAMM) from Homo sapiens (Human).